Reading from the N-terminus, the 172-residue chain is ATP synthase subunit b (172 aa).

A helical membrane pass occupies residues 13–33; sequence GINGGDILFQLVMFLILLALL.

It belongs to the ATPase B chain family. In terms of assembly, F-type ATPases have 2 components, F(1) - the catalytic core - and F(0) - the membrane proton channel. F(1) has five subunits: alpha(3), beta(3), gamma(1), delta(1), epsilon(1). F(0) has three main subunits: a(1), b(2) and c(10-14). The alpha and beta chains form an alternating ring which encloses part of the gamma chain. F(1) is attached to F(0) by a central stalk formed by the gamma and epsilon chains, while a peripheral stalk is formed by the delta and b chains.

It localises to the cell membrane. In terms of biological role, f(1)F(0) ATP synthase produces ATP from ADP in the presence of a proton or sodium gradient. F-type ATPases consist of two structural domains, F(1) containing the extramembraneous catalytic core and F(0) containing the membrane proton channel, linked together by a central stalk and a peripheral stalk. During catalysis, ATP synthesis in the catalytic domain of F(1) is coupled via a rotary mechanism of the central stalk subunits to proton translocation. Its function is as follows. Component of the F(0) channel, it forms part of the peripheral stalk, linking F(1) to F(0). This chain is ATP synthase subunit b, found in Priestia megaterium (strain ATCC 12872 / QMB1551) (Bacillus megaterium).